A 484-amino-acid chain; its full sequence is Oxysterol-binding protein-related protein 2 (484 aa).

Phosphoserine occurs at positions 19 and 20. The segment at 35 to 61 (DLDTSKSTRSGKNGEKPQQENGIQKHR) is disordered. Residues Lys-90 and 178–179 (HH) each bind a 1,2-diacyl-sn-glycero-3-phospho-(1D-myo-inositol-4,5-bisphosphate). Composition is skewed to basic and acidic residues over residues 319–340 (KQEKRGDQARKAKMDDGPEKAN) and 424–450 (SQEKERLEEKQREARKERAKEDAEWRT). 2 disordered regions span residues 319-348 (KQEKRGDQARKAKMDDGPEKANSDVPGDVA) and 423-454 (ASQEKERLEEKQREARKERAKEDAEWRTRWFS). An a 1,2-diacyl-sn-glycero-3-phospho-(1D-myo-inositol-4,5-bisphosphate)-binding site is contributed by 431–435 (EEKQR).

The protein belongs to the OSBP family. As to quaternary structure, monomer. Homotetramer; phosphatidylinositol-4,5-bisphosphate binding promotes formation of stable tetramers. Interacts with DIAPH1. As to expression, detected in cochlea, in inner and outer hair cells in the organ of Corti (at protein level).

It localises to the cytoplasm. The protein resides in the cytosol. It is found in the lipid droplet. Its subcellular location is the cell membrane. Functionally, intracellular transport protein that binds sterols and phospholipids and mediates lipid transport between intracellular compartments. Increases plasma membrane cholesterol levels and decreases phosphatidylinositol-4,5-bisphosphate levels in the cell membrane. Binds phosphoinositides, such as phosphatidylinositol-4,5-bisphosphate. Exhibits strong binding to phosphatidic acid and weak binding to phosphatidylinositol 3-phosphate. Binds cholesterol, dehydroergosterol, 22(R)-hydroxycholesterol and 25-hydroxycholesterol (in vitro). This Mus musculus (Mouse) protein is Oxysterol-binding protein-related protein 2 (Osbpl2).